The chain runs to 106 residues: EspC protein homolog (106 aa).

It belongs to the EspC family.

The polypeptide is EspC protein homolog (Mycobacterium leprae (strain TN)).